A 384-amino-acid chain; its full sequence is 8-amino-7-oxononanoate synthase (384 aa).

Residue R21 participates in substrate binding. 108–109 (GF) contacts pyridoxal 5'-phosphate. A substrate-binding site is contributed by H133. Pyridoxal 5'-phosphate-binding residues include S179, H207, and T233. K236 is modified (N6-(pyridoxal phosphate)lysine). Residue T352 coordinates substrate.

The protein belongs to the class-II pyridoxal-phosphate-dependent aminotransferase family. BioF subfamily. As to quaternary structure, homodimer. Requires pyridoxal 5'-phosphate as cofactor.

The enzyme catalyses 6-carboxyhexanoyl-[ACP] + L-alanine + H(+) = (8S)-8-amino-7-oxononanoate + holo-[ACP] + CO2. It functions in the pathway cofactor biosynthesis; biotin biosynthesis. Catalyzes the decarboxylative condensation of pimeloyl-[acyl-carrier protein] and L-alanine to produce 8-amino-7-oxononanoate (AON), [acyl-carrier protein], and carbon dioxide. The polypeptide is 8-amino-7-oxononanoate synthase (Escherichia coli (strain UTI89 / UPEC)).